Reading from the N-terminus, the 250-residue chain is AA9 family lytic polysaccharide monooxygenase B (250 aa).

A signal peptide spans 1 to 21 (MTLSKITSIAGLLASASLVAG). Positions 22 and 107 each coordinate Cu(2+). His22 is subject to Methylhistidine. Disulfide bonds link Cys77–Cys199 and Cys118–Cys122. N-linked (GlcNAc...) asparagine glycosylation occurs at Asn159. His185 and Gln194 together coordinate O2. A Cu(2+)-binding site is contributed by Tyr196.

It belongs to the polysaccharide monooxygenase AA9 family. Cu(2+) serves as cofactor. Post-translationally, the catalytically essential N-terminal histidine His-22 is post-translationally modified by methylation to prevent protonation of the histidine side chain, and protect the critical active site of the enzyme from oxidative damage.

The protein resides in the secreted. The enzyme catalyses [(1-&gt;4)-beta-D-glucosyl]n+m + reduced acceptor + O2 = 4-dehydro-beta-D-glucosyl-[(1-&gt;4)-beta-D-glucosyl]n-1 + [(1-&gt;4)-beta-D-glucosyl]m + acceptor + H2O.. In terms of biological role, lytic polysaccharide monooxygenase (LPMO) that depolymerizes crystalline and amorphous polysaccharides via the oxidation of scissile alpha- or beta-(1-4)-glycosidic bonds, yielding C1 and C4 oxidation products. Catalysis by LPMOs requires the reduction of the active-site copper from Cu(II) to Cu(I) by a reducing agent and H(2)O(2) or O(2) as a cosubstrate. Shows activity on phosphoric acid swollen cellulose, on NaOH pretreated soy spent flakes as well as on crystalline cellulose (Avicel). Does not have a positive effect on cel6A activity, but acts synergistically with endoglucanase egl7. The protein is AA9 family lytic polysaccharide monooxygenase B of Aspergillus fumigatus (strain ATCC MYA-4609 / CBS 101355 / FGSC A1100 / Af293) (Neosartorya fumigata).